The following is a 364-amino-acid chain: Fructose-bisphosphate aldolase B (364 aa).

Substrate contacts are provided by Arg-56 and Lys-147. The active-site Proton acceptor is the Glu-188. The active-site Schiff-base intermediate with dihydroxyacetone-P is the Lys-230.

Belongs to the class I fructose-bisphosphate aldolase family. As to quaternary structure, homotetramer.

Its subcellular location is the cytoplasm. It localises to the cytoskeleton. The protein resides in the microtubule organizing center. The protein localises to the centrosome. It is found in the centriolar satellite. The enzyme catalyses beta-D-fructose 1,6-bisphosphate = D-glyceraldehyde 3-phosphate + dihydroxyacetone phosphate. It functions in the pathway carbohydrate degradation; glycolysis; D-glyceraldehyde 3-phosphate and glycerone phosphate from D-glucose: step 4/4. In Sparus aurata (Gilthead sea bream), this protein is Fructose-bisphosphate aldolase B (aldob).